The chain runs to 1103 residues: Centrosomal protein of 126 kDa (1103 aa).

Over residues 1–12 (MLAGRPGAQSAG) the composition is skewed to low complexity. Residues 1–36 (MLAGRPGAQSAGAGVGAGPPDAPGARDGGGRPRPGA) form a disordered region. 2 coiled-coil regions span residues 43–116 (HLEK…FQRA) and 182–222 (QKHL…KLLE). Disordered regions lie at residues 380–409 (NTAESNVVRASDPTEGAVQRERPAQMESPT) and 723–812 (ESKA…PGQS). The span at 723–735 (ESKAPVHASDSKT) shows a compositional bias: basic and acidic residues. The span at 736–748 (QKTKPQRGVKFTR) shows a compositional bias: basic residues. 2 stretches are compositionally biased toward polar residues: residues 763–784 (RKPTVSQPQTSSKANTVAQTQG) and 798–812 (NIKSGKNMQVSPGQS).

Interacts with DCTN1.

It localises to the midbody. It is found in the cytoplasm. Its subcellular location is the cytoskeleton. The protein localises to the microtubule organizing center. The protein resides in the centrosome. It localises to the cilium basal body. Participate in cytokinesis. Necessary for microtubules and mitotic spindle organization. Involved in primary cilium formation. The polypeptide is Centrosomal protein of 126 kDa (Mus musculus (Mouse)).